Reading from the N-terminus, the 584-residue chain is Peroxynitrite isomerase THAP4 (584 aa).

Residues 1-85 (MVICCAAANC…LKPTAVPSIF (85 aa)) form a THAP-type zinc finger. Residues 84–330 (IFHLAEKKRR…EAVQSEHSDA (247 aa)) are disordered. The span at 89-104 (EKKRRAGGHGRPRRRD) shows a compositional bias: basic residues. Over residues 122–138 (GKAAAGSPSSSSASPMA) the composition is skewed to low complexity. The segment covering 158 to 178 (AARETAGQERGRQPLEGRAED) has biased composition (basic and acidic residues). Residues 190-208 (GEAGTGAEDAGEEGATPAD) are compositionally biased toward low complexity. Positions 236–239 (LHSY) match the HCFC1-binding motif (HBM) motif. Residue Ser240 is modified to Phosphoserine. The segment covering 248 to 267 (ERPAVPREPVERKRLRRDAE) has biased composition (basic and acidic residues). The tract at residues 422–584 (PPKMSPVVEP…LHVTYKKVTP (163 aa)) is nitrobindin. Residues Thr451 and His574 each contribute to the heme b site.

This sequence in the C-terminal section; belongs to the nitrobindin family. In terms of assembly, homodimer. Heme b serves as cofactor.

It is found in the cytoplasm. The protein localises to the nucleus. It catalyses the reaction peroxynitrite = nitrate. It participates in nitrogen metabolism. In terms of biological role, heme-binding protein able to scavenge peroxynitrite and to protect free L-tyrosine against peroxynitrite-mediated nitration, by acting as a peroxynitrite isomerase that converts peroxynitrite to nitrate. Therefore, this protein likely plays a role in peroxynitrite sensing and in the detoxification of reactive nitrogen and oxygen species (RNS and ROS, respectively). Is able to bind nitric oxide (NO) in vitro, but may act as a sensor of peroxynitrite levels in vivo, possibly modulating the transcriptional activity residing in the N-terminal region. The sequence is that of Peroxynitrite isomerase THAP4 from Bos taurus (Bovine).